The primary structure comprises 136 residues: MAKKSSSRLPKRKGEYTYRGKTVSELQELSLEEFAELLPSRERRSIKRGFTDGQKKVLHEFKEGKKIRTHHRDMIILPEMIGIAIEVHNGKEFVNVELQPEMIGHRFGEFAPTRSRVNHGSAGVGATRSSKFVPLK.

This sequence belongs to the universal ribosomal protein uS19 family.

Protein S19 forms a complex with S13 that binds strongly to the 16S ribosomal RNA. The chain is Small ribosomal subunit protein uS19 from Methanosarcina mazei (strain ATCC BAA-159 / DSM 3647 / Goe1 / Go1 / JCM 11833 / OCM 88) (Methanosarcina frisia).